A 1020-amino-acid chain; its full sequence is LLGL scribble cell polarity complex component 2 (1020 aa).

14 WD repeats span residues 36-69, 76-117, 132-169, 193-227, 233-268, 282-324, 332-366, 388-464, 508-583, 592-653, 713-769, 778-830, 835-888, and 902-925; these read SALG…FMGL, VTQI…DESF, ITVV…DRTI, ALQE…LYHF, LENI…QPEP, AITR…GQQT, VIGF…VIDL, TCSH…YKLS, QKIF…FVLV, TSLA…LRQS, VRTL…KEIQ, GILV…VSAK, LTAL…VRYS, and VFTK…SLST. Residue S653 is modified to Phosphoserine. The span at 653–669 shows a compositional bias: basic residues; sequence SFRRMRRSRVSSRKRHP. The tract at residues 653 to 689 is disordered; that stretch reads SFRRMRRSRVSSRKRHPAGPPGEAQEGSAKAERPGLQ. Disordered regions lie at residues 938-975 and 992-1020; these read AETK…PGLV and STLE…GGAE. S965 and S1015 each carry phosphoserine.

It belongs to the WD repeat L(2)GL family. In terms of assembly, interacts with GPSM2/LGN, PRKCI/aPKC and PARD6B/Par-6. The complex is enhanced during mitosis. Interacts with DCAF1. Post-translationally, phosphorylated at Ser-653 by PRKCI. Phosphorylation is enhanced during cell polarization induced by calcium. Phosphorylation may occur during the cell-cell contact-induced cell polarization and may contribute to the segregation of LLGL2 from the PRKCI/aPKC and PARD6B/Par-6 complex.

It localises to the cytoplasm. Its function is as follows. Part of a complex with GPSM2/LGN, PRKCI/aPKC and PARD6B/Par-6, which may ensure the correct organization and orientation of bipolar spindles for normal cell division. This complex plays roles in the initial phase of the establishment of epithelial cell polarity. The chain is LLGL scribble cell polarity complex component 2 (LLGL2) from Homo sapiens (Human).